Consider the following 112-residue polypeptide: Glutaredoxin-C6 (112 aa).

In terms of domain architecture, Glutaredoxin spans 3–103 (LAKAKETVAS…PLLTEAGAIA (101 aa)). Cys-23 and Cys-26 are disulfide-bonded.

This sequence belongs to the glutaredoxin family. CPYC subfamily. Post-translationally, the N-terminus is blocked. Expressed in aleurone layer.

Its subcellular location is the cytoplasm. Functionally, has a glutathione-disulfide oxidoreductase activity in the presence of NADPH and glutathione reductase. Reduces low molecular weight disulfides and proteins. Possesses thioltransferase, dehydroascorbate reductase and GSH-dependent peroxidase activities in vitro. This Oryza sativa subsp. japonica (Rice) protein is Glutaredoxin-C6 (GRXC6).